Consider the following 399-residue polypeptide: Forkhead box protein A4 (399 aa).

Residues 119 to 213 (KPPYSYISLI…ENGCYLRRQK (95 aa)) constitute a DNA-binding region (fork-head). The segment covering 219 to 234 (RSKSGEREKKVNKPGD) has biased composition (basic and acidic residues). Residues 219–290 (RSKSGEREKK…VGLSPTSEQA (72 aa)) are disordered. Residues 267–277 (STGSSIHQASG) show a composition bias toward polar residues.

Its subcellular location is the nucleus. Transcriptional repressor involved in embryonic nervous system development. Plays a role in the induction and patterning of the anterior-posterior neural axis. Involved in the establishment of floor plate differentiation from neural plate cells during gastrulation. Binds the anf1 promoter sequence to restrict expression of anf1 to the anterior of the neural plate, thereby patterning the forebrain. Can bind to the HNF-3-alpha DNA target sequence. Cooperates with t/bra in a dose-dependent manner to specify dorsal mesoderm formation, including notochord. May be involved in the dorso-ventral patterning of the mesoderm. Binds to DNA via the target sequence 5'-[GA]TAAA[TC]A-3', with 5'-GTAAATA-3' being the preferred binding site. This is Forkhead box protein A4 from Xenopus tropicalis (Western clawed frog).